The following is a 153-amino-acid chain: Ubiquitin-conjugating enzyme E2 36 (153 aa).

A UBC core domain is found at 5–151; it reads NLPRRIIKET…AKEWTRLYAS (147 aa). The active-site Glycyl thioester intermediate is Cys-89.

Belongs to the ubiquitin-conjugating enzyme family. As to quaternary structure, interacts with yeast and human Mms2, with the RING domain of RGLG2 and with UEV1A, UEV1B, UEV1C and UEV1D. Ubiquitously expressed at low level.

It catalyses the reaction S-ubiquitinyl-[E1 ubiquitin-activating enzyme]-L-cysteine + [E2 ubiquitin-conjugating enzyme]-L-cysteine = [E1 ubiquitin-activating enzyme]-L-cysteine + S-ubiquitinyl-[E2 ubiquitin-conjugating enzyme]-L-cysteine.. Its pathway is protein modification; protein ubiquitination. In terms of biological role, catalyzes the synthesis of non-canonical poly-ubiquitin chains that are linked through 'Lys-63'. This type of poly-ubiquitination does not lead to protein degradation by the proteasome. Mediates transcriptional activation of target genes. Required for postreplication repair of UV-damaged DNA and for adapting root developmental programs to suboptimal availability of iron. The protein is Ubiquitin-conjugating enzyme E2 36 (UBC36) of Arabidopsis thaliana (Mouse-ear cress).